Reading from the N-terminus, the 470-residue chain is Probable G-protein coupled receptor 152 (470 aa).

The segment at 1–25 (MDTTMEADLGATGHRPRTELDDEDS) is disordered. At 1–33 (MDTTMEADLGATGHRPRTELDDEDSYPQGGWDT) the chain is on the extracellular side. A helical membrane pass occupies residues 34–54 (VFLVALLLLGLPANGLMAWLA). The Cytoplasmic segment spans residues 55 to 65 (GSQARHGAGTR). A helical transmembrane segment spans residues 66-86 (LALLLLSLALSDFLFLAAAAF). The Extracellular segment spans residues 87–105 (QILEIRHGGHWPLGTAACR). A disulfide bridge connects residues C104 and C182. A helical membrane pass occupies residues 106-126 (FYYFLWGVSYSSGLFLLAALS). The Cytoplasmic portion of the chain corresponds to 127 to 148 (LDRCLLALCPHWYPGHRPVRLP). A helical transmembrane segment spans residues 149–169 (LWVCAGVWVLATLFSVPWLVF). Residues 170-194 (PEAAVWWYDLVICLDFWDSEELSLR) are Extracellular-facing. A helical transmembrane segment spans residues 195–215 (MLEVLGGFLPFLLLLVCHVLT). The Cytoplasmic segment spans residues 216 to 257 (QATACRTCHRQQQPAACRGFARVARTILSAYVVLRLPYQLAQ). The chain crosses the membrane as a helical span at residues 258 to 278 (LLYLAFLWDVYSGYLLWEALV). The Extracellular segment spans residues 279 to 281 (YSD). Residues 282–302 (YLILLNSCLSPFLCLMASADL) traverse the membrane as a helical segment. Topologically, residues 303-470 (RTLLRSVLSS…PEAAPGAGPT (168 aa)) are cytoplasmic. Residues 322-470 (PGSFTPTEPQ…PEAAPGAGPT (149 aa)) form a disordered region. Polar residues-rich tracts occupy residues 325–335 (FTPTEPQTQLD) and 348–414 (AQSQ…NVQT). Low complexity predominate over residues 415–425 (PAPAASSVPSP).

The protein belongs to the G-protein coupled receptor 1 family.

The protein localises to the cell membrane. Its function is as follows. Orphan receptor. The protein is Probable G-protein coupled receptor 152 (GPR152) of Homo sapiens (Human).